Reading from the N-terminus, the 196-residue chain is Imidazoleglycerol-phosphate dehydratase (196 aa).

This sequence belongs to the imidazoleglycerol-phosphate dehydratase family.

It is found in the cytoplasm. It catalyses the reaction D-erythro-1-(imidazol-4-yl)glycerol 3-phosphate = 3-(imidazol-4-yl)-2-oxopropyl phosphate + H2O. Its pathway is amino-acid biosynthesis; L-histidine biosynthesis; L-histidine from 5-phospho-alpha-D-ribose 1-diphosphate: step 6/9. This chain is Imidazoleglycerol-phosphate dehydratase, found in Granulibacter bethesdensis (strain ATCC BAA-1260 / CGDNIH1).